The sequence spans 94 residues: Protein translocase subunit SecE (94 aa).

The interval 1–32 (MTDAVGSIDMPDAQDEAPDSKKSRKGGKRGKK) is disordered. Residues 22 to 32 (KSRKGGKRGKK) are compositionally biased toward basic residues. A helical transmembrane segment spans residues 65 to 85 (TVVIIFVVIMIGLVTLIDYGF).

It belongs to the SecE/SEC61-gamma family. As to quaternary structure, component of the Sec protein translocase complex. Heterotrimer consisting of SecY, SecE and SecG subunits. The heterotrimers can form oligomers, although 1 heterotrimer is thought to be able to translocate proteins. Interacts with the ribosome. Interacts with SecDF, and other proteins may be involved. Interacts with SecA.

The protein resides in the cell membrane. Its function is as follows. Essential subunit of the Sec protein translocation channel SecYEG. Clamps together the 2 halves of SecY. May contact the channel plug during translocation. The chain is Protein translocase subunit SecE from Streptomyces lividans.